A 160-amino-acid chain; its full sequence is Ribosomal RNA large subunit methyltransferase H (160 aa).

S-adenosyl-L-methionine contacts are provided by residues leucine 76, glycine 108, and 127–132 (LGKMTW).

The protein belongs to the RNA methyltransferase RlmH family. In terms of assembly, homodimer.

Its subcellular location is the cytoplasm. The catalysed reaction is pseudouridine(1915) in 23S rRNA + S-adenosyl-L-methionine = N(3)-methylpseudouridine(1915) in 23S rRNA + S-adenosyl-L-homocysteine + H(+). Specifically methylates the pseudouridine at position 1915 (m3Psi1915) in 23S rRNA. The protein is Ribosomal RNA large subunit methyltransferase H of Rhizobium meliloti (strain 1021) (Ensifer meliloti).